A 161-amino-acid polypeptide reads, in one-letter code: uncharacterized protein (161 aa).

Positions 1 to 29 (MTLYDTVKELQEKLRNGEIEINTFLERLG) form a coiled coil.

This is an uncharacterized protein from Acidianus convivator (ATV).